The sequence spans 185 residues: Ribosome-recycling factor (185 aa).

The protein belongs to the RRF family.

Its subcellular location is the cytoplasm. Functionally, responsible for the release of ribosomes from messenger RNA at the termination of protein biosynthesis. May increase the efficiency of translation by recycling ribosomes from one round of translation to another. The protein is Ribosome-recycling factor of Pseudomonas fluorescens (strain ATCC BAA-477 / NRRL B-23932 / Pf-5).